Consider the following 1134-residue polypeptide: Mediator of RNA polymerase II transcription subunit 12 (1134 aa).

The protein belongs to the Mediator complex subunit 12 family. In terms of assembly, component of the srb8-11 complex which consists of rb8, srb9(TRAP240), srb10 and srb11. The srb8-11 complex associates with the Mediator complex thereby blocking association with RNA polymerase II and leading to reduced transcriptional activation by Mediator.

The protein localises to the nucleus. Its function is as follows. Component of the srb8-11 complex. The srb8-11 complex is a regulatory module of the Mediator complex which is itself involved in regulation of basal and activated RNA polymerase II-dependent transcription. The srb8-11 complex may be involved in the transcriptional repression of a subset of genes regulated by Mediator. It may inhibit the association of the Mediator complex with RNA polymerase II to form the holoenzyme complex. This chain is Mediator of RNA polymerase II transcription subunit 12 (srb8), found in Schizosaccharomyces pombe (strain 972 / ATCC 24843) (Fission yeast).